Consider the following 410-residue polypeptide: ACT domain-containing protein ACR10 (410 aa).

3 consecutive ACT domains span residues 22 to 105 (VITI…SESQ), 114 to 197 (LLKL…LVGP), and 245 to 324 (LIHI…VVMM).

In terms of biological role, may bind amino acids. The protein is ACT domain-containing protein ACR10 of Arabidopsis thaliana (Mouse-ear cress).